Here is a 235-residue protein sequence, read N- to C-terminus: uncharacterized protein (235 aa).

3 consecutive transmembrane segments (helical) span residues 41 to 61 (IFWHPLYLAVFGLVFMGIYRL), 71 to 91 (LRTFVLLILVSAVFLTLIEFP), and 129 to 149 (IGIIGILPANAPGAYQNTPTI).

It is found in the membrane. This is an uncharacterized protein from Schizosaccharomyces pombe (strain 972 / ATCC 24843) (Fission yeast).